The following is a 78-amino-acid chain: Short neurotoxin 342 (78 aa).

The N-terminal stretch at 1–21 (MKTLLLTLVVLTIVCLDLGYT) is a signal peptide. 4 cysteine pairs are disulfide-bonded: C24-C43, C38-C57, C59-C70, and C71-C76.

Belongs to the three-finger toxin family. Short-chain subfamily. Type I alpha-neurotoxin sub-subfamily. As to expression, expressed by the venom gland.

It localises to the secreted. Binds to muscle nicotinic acetylcholine receptor (nAChR) and inhibit acetylcholine from binding to the receptor, thereby impairing neuromuscular transmission. This Drysdalia coronoides (White-lipped snake) protein is Short neurotoxin 342.